We begin with the raw amino-acid sequence, 169 residues long: Cell division protein B3 (169 aa).

Its function is as follows. Part of a cell division machinery. May fulfill a coordination function between the Cdv proteins during cell division. This is Cell division protein B3 from Sulfolobus acidocaldarius (strain ATCC 33909 / DSM 639 / JCM 8929 / NBRC 15157 / NCIMB 11770).